The following is a 341-amino-acid chain: Probable dual-specificity RNA methyltransferase RlmN (341 aa).

Catalysis depends on Glu88, which acts as the Proton acceptor. Residues 94–314 (EGDRATLCIS…ESHGFTCTIR (221 aa)) form the Radical SAM core domain. A disulfide bond links Cys101 and Cys325. Residues Cys108, Cys112, and Cys115 each coordinate [4Fe-4S] cluster. Residues 153–154 (GE), Ser185, 206–208 (SLH), and His282 each bind S-adenosyl-L-methionine. The active-site S-methylcysteine intermediate is the Cys325.

The protein belongs to the radical SAM superfamily. RlmN family. The cofactor is [4Fe-4S] cluster.

It localises to the cytoplasm. It catalyses the reaction adenosine(2503) in 23S rRNA + 2 reduced [2Fe-2S]-[ferredoxin] + 2 S-adenosyl-L-methionine = 2-methyladenosine(2503) in 23S rRNA + 5'-deoxyadenosine + L-methionine + 2 oxidized [2Fe-2S]-[ferredoxin] + S-adenosyl-L-homocysteine. The catalysed reaction is adenosine(37) in tRNA + 2 reduced [2Fe-2S]-[ferredoxin] + 2 S-adenosyl-L-methionine = 2-methyladenosine(37) in tRNA + 5'-deoxyadenosine + L-methionine + 2 oxidized [2Fe-2S]-[ferredoxin] + S-adenosyl-L-homocysteine. Its function is as follows. Specifically methylates position 2 of adenine 2503 in 23S rRNA and position 2 of adenine 37 in tRNAs. This Porphyromonas gingivalis (strain ATCC BAA-308 / W83) protein is Probable dual-specificity RNA methyltransferase RlmN.